Here is a 256-residue protein sequence, read N- to C-terminus: Gluconate 5-dehydrogenase (256 aa).

Leu15 to Val39 serves as a coordination point for NADP(+). Ser147 is a substrate binding site. The active-site Proton acceptor is the Tyr160.

The protein belongs to the short-chain dehydrogenases/reductases (SDR) family. Homodimer.

It localises to the cytoplasm. The catalysed reaction is D-gluconate + NADP(+) = 5-dehydro-D-gluconate + NADPH + H(+). Catalyzes the reversible NADP-dependent oxidation of gluconate to 5-ketogluconate. Is involved in the non-phosphorylative, ketogenic oxidation of glucose. Is almost inactive with NAD as cosubstrate. Displays high substrate specificity since D-Glucose, D-sorbitol, and D-mannitol are not oxidized by the enzyme, and 2-ketogluconate and L-sorbose are not reduced. Can accept D-fructose as a substrate, with a rate that is only 10% of the rate of 5-ketogluconate reduction. This is Gluconate 5-dehydrogenase from Gluconobacter oxydans (strain 621H) (Gluconobacter suboxydans).